Consider the following 105-residue polypeptide: ATP-dependent Clp protease adapter protein ClpS (105 aa).

This sequence belongs to the ClpS family. In terms of assembly, binds to the N-terminal domain of the chaperone ClpA.

In terms of biological role, involved in the modulation of the specificity of the ClpAP-mediated ATP-dependent protein degradation. In Prochlorococcus marinus (strain MIT 9515), this protein is ATP-dependent Clp protease adapter protein ClpS.